A 323-amino-acid chain; its full sequence is MNIENNEHSFRPHPELGEHISFTKEQPIDIHDSLASLIETVAPLEIDLVLEGETGTGKDTLARKIHRLSGCSGRLIAVNCAAIPETLAESELFGVNNGAYTGAVQARAGYIEEANNGILFLDEIDSMPLSLQAKLLRVLENRGIERLGGTRFIPVNMRVIVATQKPLLTLVEQGTFRRDLYFRLNTLSIQLQPLRSQVEIIIPLFRHFIAKAATTMQCTPPEITQELCEYLLSYSWPGNIRELKTAAKRFTLGLPPLNVPRNAERQGPQLKEILRRIEKSLIHDCLVRHGHSIDEAAMELGMPLRTLYHRIKLLNVTTQRIIV.

The 211-residue stretch at 41-251 folds into the Sigma-54 factor interaction domain; it reads VAPLEIDLVL…ELKTAAKRFT (211 aa). Residues 52 to 59 and 123 to 132 contribute to the ATP site; these read GETGTGKD and EIDSMPLSLQ. A DNA-binding region (H-T-H motif) is located at residues 293-312; sequence IDEAAMELGMPLRTLYHRIK.

Positive activator of wtsB involved in plant pathogenicity. Probably interacts with sigma-54. The protein is Pathogenicity locus probable regulatory protein WtsA (wtsA) of Pantoea stewartii subsp. stewartii (Erwinia stewartii).